Reading from the N-terminus, the 273-residue chain is Inositol monophosphatase 1 (273 aa).

Residues Glu71, Asp91, Val93, and Asp94 each coordinate Mg(2+). Glu71 provides a ligand contact to substrate. Substrate is bound by residues 93–96, 194–196, and Asp221; these read VDGT and GSC. Asp221 provides a ligand contact to Mg(2+).

This sequence belongs to the inositol monophosphatase superfamily. The cofactor is Mg(2+). In terms of tissue distribution, expressed in seedlings, flowers, young and matures green fruits. Detected in roots and stems.

The enzyme catalyses a myo-inositol phosphate + H2O = myo-inositol + phosphate. It functions in the pathway polyol metabolism; myo-inositol biosynthesis; myo-inositol from D-glucose 6-phosphate: step 2/2. Its function is as follows. Responsible for the provision of inositol required for synthesis of phosphatidylinositol and polyphosphoinositides. The protein is Inositol monophosphatase 1 (IMP1) of Solanum lycopersicum (Tomato).